Here is a 216-residue protein sequence, read N- to C-terminus: Fibroblast growth factor 17 (216 aa).

The signal sequence occupies residues 1–22 (MGAARLLPNLTLCLQLLILCCQ). N-linked (GlcNAc...) asparagine glycosylation occurs at asparagine 137. A disordered region spans residues 195-216 (FEFVGSAPTRRTKRTRRPQSQT). The segment covering 204–216 (RRTKRTRRPQSQT) has biased composition (basic residues).

Belongs to the heparin-binding growth factors family. Interacts with FGFR3 and FGFR4.

It is found in the secreted. In terms of biological role, plays an important role in the regulation of embryonic development and as signaling molecule in the induction and patterning of the embryonic brain. Required for normal brain development. This chain is Fibroblast growth factor 17 (Fgf17), found in Mus musculus (Mouse).